The chain runs to 139 residues: Tol-Pal system protein TolR (139 aa).

The chain crosses the membrane as a helical span at residues 15–35; the sequence is IVPFLDVLLVLVLIFMATAPI.

The protein belongs to the ExbD/TolR family. The Tol-Pal system is composed of five core proteins: the inner membrane proteins TolA, TolQ and TolR, the periplasmic protein TolB and the outer membrane protein Pal. They form a network linking the inner and outer membranes and the peptidoglycan layer.

The protein resides in the cell inner membrane. Functionally, part of the Tol-Pal system, which plays a role in outer membrane invagination during cell division and is important for maintaining outer membrane integrity. In Haemophilus influenzae (strain ATCC 51907 / DSM 11121 / KW20 / Rd), this protein is Tol-Pal system protein TolR.